We begin with the raw amino-acid sequence, 347 residues long: Isopentenyl-diphosphate delta-isomerase (347 aa).

Positions 1–31 (MDESNSQFEKRKRDHIRIALDPRSQTDGQNG) are disordered. The segment covering 8-20 (FEKRKRDHIRIAL) has biased composition (basic and acidic residues). Position 11 to 12 (11 to 12 (RK)) interacts with substrate. FMN contacts are provided by residues Ser-72, 73 to 75 (SMT), Ser-103, and Asn-132. 103–105 (SQR) serves as a coordination point for substrate. Residue Gln-166 coordinates substrate. Glu-167 contacts Mg(2+). FMN-binding positions include Lys-198, Ser-223, Thr-228, 279–281 (GVR), and 300–301 (AK).

It belongs to the IPP isomerase type 2 family. As to quaternary structure, homooctamer. Dimer of tetramers. Requires FMN as cofactor. NADPH is required as a cofactor. The cofactor is Mg(2+).

The protein localises to the cytoplasm. It carries out the reaction isopentenyl diphosphate = dimethylallyl diphosphate. Its function is as follows. Involved in the biosynthesis of isoprenoids. Catalyzes the 1,3-allylic rearrangement of the homoallylic substrate isopentenyl (IPP) to its allylic isomer, dimethylallyl diphosphate (DMAPP). The sequence is that of Isopentenyl-diphosphate delta-isomerase from Bdellovibrio bacteriovorus (strain ATCC 15356 / DSM 50701 / NCIMB 9529 / HD100).